Here is a 612-residue protein sequence, read N- to C-terminus: Phosphomethylpyrimidine synthase (612 aa).

Disordered regions lie at residues 1 to 33 (MTIK…TEAG) and 105 to 146 (AGRP…RDGN). Over residues 12–24 (TQNTAQADTAENT) the composition is skewed to low complexity. Basic and acidic residues predominate over residues 105-117 (AGRPVRPEDDGIK). Residues N213, M242, Y271, H307, 327–329 (SRG), 368–371 (DGLR), and E407 each bind substrate. H411 is a Zn(2+) binding site. Y434 contributes to the substrate binding site. H475 serves as a coordination point for Zn(2+). [4Fe-4S] cluster-binding residues include C555, C558, and C563.

The protein belongs to the ThiC family. It depends on [4Fe-4S] cluster as a cofactor.

It catalyses the reaction 5-amino-1-(5-phospho-beta-D-ribosyl)imidazole + S-adenosyl-L-methionine = 4-amino-2-methyl-5-(phosphooxymethyl)pyrimidine + CO + 5'-deoxyadenosine + formate + L-methionine + 3 H(+). It participates in cofactor biosynthesis; thiamine diphosphate biosynthesis. Catalyzes the synthesis of the hydroxymethylpyrimidine phosphate (HMP-P) moiety of thiamine from aminoimidazole ribotide (AIR) in a radical S-adenosyl-L-methionine (SAM)-dependent reaction. This chain is Phosphomethylpyrimidine synthase, found in Streptomyces coelicolor (strain ATCC BAA-471 / A3(2) / M145).